Consider the following 444-residue polypeptide: Xylose isomerase (444 aa).

D307 and D309 together coordinate Mg(2+).

The protein belongs to the xylose isomerase family. In terms of assembly, homotetramer. Requires Mg(2+) as cofactor.

The protein resides in the cytoplasm. The catalysed reaction is alpha-D-xylose = alpha-D-xylulofuranose. In Thermotoga neapolitana (strain ATCC 49049 / DSM 4359 / NBRC 107923 / NS-E), this protein is Xylose isomerase.